Consider the following 185-residue polypeptide: Ribosome-recycling factor (185 aa).

This sequence belongs to the RRF family.

The protein localises to the cytoplasm. Functionally, responsible for the release of ribosomes from messenger RNA at the termination of protein biosynthesis. May increase the efficiency of translation by recycling ribosomes from one round of translation to another. The protein is Ribosome-recycling factor of Neisseria gonorrhoeae (strain ATCC 700825 / FA 1090).